A 932-amino-acid chain; its full sequence is Isoleucine--tRNA ligase (932 aa).

The 'HIGH' region motif lies at 58 to 68; that stretch reads PYANGDIHIGH. L-isoleucyl-5'-AMP is bound at residue Glu-559. Residues 600 to 604 carry the 'KMSKS' region motif; it reads KMSKS. Lys-603 is a binding site for ATP. Residues Cys-895, Cys-898, Cys-915, and Cys-918 each coordinate Zn(2+).

Belongs to the class-I aminoacyl-tRNA synthetase family. IleS type 1 subfamily. In terms of assembly, monomer. Zn(2+) is required as a cofactor.

The protein resides in the cytoplasm. It catalyses the reaction tRNA(Ile) + L-isoleucine + ATP = L-isoleucyl-tRNA(Ile) + AMP + diphosphate. Its function is as follows. Catalyzes the attachment of isoleucine to tRNA(Ile). As IleRS can inadvertently accommodate and process structurally similar amino acids such as valine, to avoid such errors it has two additional distinct tRNA(Ile)-dependent editing activities. One activity is designated as 'pretransfer' editing and involves the hydrolysis of activated Val-AMP. The other activity is designated 'posttransfer' editing and involves deacylation of mischarged Val-tRNA(Ile). The polypeptide is Isoleucine--tRNA ligase (Saccharophagus degradans (strain 2-40 / ATCC 43961 / DSM 17024)).